Here is a 746-residue protein sequence, read N- to C-terminus: Protein Niban 2 (746 aa).

Gly2 is lipidated: N-myristoyl glycine. The PH domain maps to 68–192; sequence RIVFSGNLFQ…WQAVLQDCIR (125 aa). A phosphoserine mark is found at Ser568, Ser574, Ser601, and Ser603. The disordered stretch occupies residues 590 to 746; it reads GEEYSNSGGG…EDSAGVQTEF (157 aa). Thr606 is subject to Phosphothreonine. Phosphoserine is present on residues Ser609, Ser624, Ser638, Ser641, Ser646, Ser665, Ser681, Ser692, and Ser696. A compositionally biased stretch (low complexity) spans 671–693; that stretch reads PLLNGAPAGESPQPKAAPEASSP. The span at 720–746 shows a compositional bias: polar residues; it reads GEQVSSPSSHPALHTTTEDSAGVQTEF.

Belongs to the Niban family. Phosphorylated at Ser-641, Ser-646, Ser-692 and Ser-696 by the BRAF/MKK/ERK signaling cascade. In melanoma cells, the C-terminal phosphorylation may prevent targeting to the plasma membrane. In terms of processing, as apoptosis proceeds, degraded via an proteasome-independent pathway, probably by caspases.

The protein localises to the cytoplasm. The protein resides in the cytosol. Its subcellular location is the cell junction. It localises to the adherens junction. It is found in the membrane. May play a role in apoptosis suppression. May promote melanoma cell invasion in vitro. The protein is Protein Niban 2 of Homo sapiens (Human).